Consider the following 891-residue polypeptide: Mating-type protein A-alpha Z3 (891 aa).

Positions 111 to 189 form a DNA-binding region, homeobox; TALE-type; that stretch reads EWQENMPPVP…AARIRIGWTH (79 aa). Positions 331 to 360 are enriched in basic and acidic residues; sequence AAHEKRQQARREQRQAKNERDAAQMREEQR. Disordered regions lie at residues 331–592, 606–671, 779–812, and 836–861; these read AAHE…VNWD, YLDS…ASET, SILS…VEPS, and PKKD…SPDT. Acidic residues-rich tracts occupy residues 369–400 and 427–457; these read SSDD…SDSD and ADDE…EEDT. 2 stretches are compositionally biased toward low complexity: residues 542-559 and 612-650; these read PSKT…KSST and SSRP…SSVS. Residues 651-660 are compositionally biased toward polar residues; the sequence is TCETVGTDSS. A compositionally biased stretch (basic and acidic residues) spans 841-850; it reads RYAERAERRA.

The protein belongs to the TALE/M-ATYP homeobox family.

The protein localises to the nucleus. Functionally, specifies A-alpha-3 mating-type. May regulate the expression of genes specific to the homokaryotic cell type. The polypeptide is Mating-type protein A-alpha Z3 (Schizophyllum commune (Split gill fungus)).